Here is a 443-residue protein sequence, read N- to C-terminus: Trigger factor (443 aa).

Residues 161 to 246 (GDKVVIDFQG…IKKIMEGKLP (86 aa)) form the PPIase FKBP-type domain.

The protein belongs to the FKBP-type PPIase family. Tig subfamily.

The protein localises to the cytoplasm. It carries out the reaction [protein]-peptidylproline (omega=180) = [protein]-peptidylproline (omega=0). Functionally, involved in protein export. Acts as a chaperone by maintaining the newly synthesized protein in an open conformation. Functions as a peptidyl-prolyl cis-trans isomerase. In Legionella pneumophila (strain Lens), this protein is Trigger factor.